The following is a 340-amino-acid chain: MNIDISNLKVQCMGEIANVKNLKELEEFQIKYLGKKGIVKNMLKELSTLPSDKRAQAGRQLNELRDFIESQINELRKKFEEEEKQKRIQKERIDVTIPGKRVEVGAIHILSQVQKEISEIFLSMGYEIAEGPEVELDYYNFEALNIPADHPARDTQDTFYISDDVLLRTHTSPVQIRVMKSKKPPIKIISPGRVYRSDEVDATHSPIFHQIEGLFVDKGVTMADLKGTLEVFAKRFFGEETRVRFRPHHFPFTEPSAEVDISCIFCGGKGCKTCKGEGWIEILGAGMVHRKVLANCDIDPDEYTGFAFGMGVERIALLKYEIEDIRLFYENDLRFLKQFR.

Glu-254 lines the Mg(2+) pocket.

The protein belongs to the class-II aminoacyl-tRNA synthetase family. Phe-tRNA synthetase alpha subunit type 1 subfamily. Tetramer of two alpha and two beta subunits. Requires Mg(2+) as cofactor.

It localises to the cytoplasm. It catalyses the reaction tRNA(Phe) + L-phenylalanine + ATP = L-phenylalanyl-tRNA(Phe) + AMP + diphosphate + H(+). The chain is Phenylalanine--tRNA ligase alpha subunit from Caldicellulosiruptor saccharolyticus (strain ATCC 43494 / DSM 8903 / Tp8T 6331).